A 229-amino-acid polypeptide reads, in one-letter code: Potassium/proton antiporter CemA (229 aa).

2 helical membrane-spanning segments follow: residues 7-27 and 106-126; these read LASLRYLACLVFLPWGISISF and IISHLLANFICFATPGAYFIL.

It belongs to the CemA family.

It localises to the plastid. The protein resides in the chloroplast inner membrane. It carries out the reaction K(+)(in) + H(+)(out) = K(+)(out) + H(+)(in). Functionally, contributes to K(+)/H(+) antiport activity by supporting proton efflux to control proton extrusion and homeostasis in chloroplasts in a light-dependent manner to modulate photosynthesis. Prevents excessive induction of non-photochemical quenching (NPQ) under continuous-light conditions. Indirectly promotes efficient inorganic carbon uptake into chloroplasts. The polypeptide is Potassium/proton antiporter CemA (Cycas taitungensis (Prince sago)).